Consider the following 227-residue polypeptide: Uracil-DNA glycosylase (227 aa).

Aspartate 65 functions as the Proton acceptor in the catalytic mechanism.

Belongs to the uracil-DNA glycosylase (UDG) superfamily. UNG family.

The protein resides in the cytoplasm. It carries out the reaction Hydrolyzes single-stranded DNA or mismatched double-stranded DNA and polynucleotides, releasing free uracil.. Functionally, excises uracil residues from the DNA which can arise as a result of misincorporation of dUMP residues by DNA polymerase or due to deamination of cytosine. The chain is Uracil-DNA glycosylase from Lactobacillus delbrueckii subsp. bulgaricus (strain ATCC 11842 / DSM 20081 / BCRC 10696 / JCM 1002 / NBRC 13953 / NCIMB 11778 / NCTC 12712 / WDCM 00102 / Lb 14).